The following is a 487-amino-acid chain: Phosphatidylserine synthase 2 (487 aa).

Over residues 1–10 (MRRGERRDAG) the composition is skewed to basic and acidic residues. Residues 1-50 (MRRGERRDAGGPRPESPVPAGRASLEEPPDGPSAGQATGPGEGRRSTESE) form a disordered region. At 1-62 (MRRGERRDAG…DDGTNTFFWR (62 aa)) the chain is on the cytoplasmic side. 2 positions are modified to phosphoserine: Ser-16 and Ser-24. A helical transmembrane segment spans residues 63–83 (AHTLTVLFILTCTLGYVTLLE). At 84–96 (ETPQDTAYNTKRG) the chain is on the lumenal side. A helical membrane pass occupies residues 97–117 (IVASILVFLCFGVTQAKDGPF). At 118–126 (SRPHPAYWR) the chain is on the cytoplasmic side. The chain crosses the membrane as a helical span at residues 127–147 (FWLCVSVVYELFLIFILFQTV). The Lumenal segment spans residues 148-313 (QDGRQFLKYV…EWKPASSLRR (166 aa)). Asn-181 carries an N-linked (GlcNAc...) asparagine glycan. The chain crosses the membrane as a helical span at residues 314–334 (WLAVCGIILVFLLAELNTFYL). Residue Lys-335 is a topological domain, cytoplasmic. The helical transmembrane segment at 336 to 356 (FVLWMPPEHYLVLLRLVFFVN) threads the bilayer. At 357 to 376 (VGGVAMREIYDFMDDPKPHK) the chain is on the lumenal side. Residues 377-397 (KLGPQAWLVAAITATELLIVV) traverse the membrane as a helical segment. At 398–403 (KYDPHT) the chain is on the cytoplasmic side. The chain crosses the membrane as a helical span at residues 404 to 424 (LTLSLPFYISQCWTLGSVLAL). Residues 425–487 (TWTVWRFFLR…AEGEGAPTPN (63 aa)) are Lumenal-facing. Residues 451 to 487 (KDDQGSTVGNGDQHPLGLDEDLLGPGVAEGEGAPTPN) form a disordered region. The residue at position 485 (Thr-485) is a Phosphothreonine.

The protein belongs to the phosphatidyl serine synthase family.

The protein resides in the endoplasmic reticulum membrane. The enzyme catalyses a 1,2-diacyl-sn-glycero-3-phosphoethanolamine + L-serine = a 1,2-diacyl-sn-glycero-3-phospho-L-serine + ethanolamine. It catalyses the reaction 1-hexadecanoyl-2-(9Z-octadecenoyl)-sn-glycero-3-phosphoethanolamine + L-serine = 1-hexadecanoyl-2-(9Z-octadecenoyl)-sn-glycero-3-phospho-L-serine + ethanolamine. The catalysed reaction is 1-hexadecanoyl-2-(4Z,7Z,10Z,13Z,16Z,19Z-docosahexaenoyl)-sn-glycero-3-phosphoethanolamine + L-serine = 1-hexadecanoyl-2-(4Z,7Z,10Z,13Z,16Z,19Z-docosahexaenoyl)-sn-glycero-3-phosphoserine + ethanolamine. It carries out the reaction 1-octadecanoyl-2-(5Z,8Z,11Z,14Z)-eicosatetraenoyl-sn-glycero-3-phosphoethanolamine + L-serine = 1-octadecanoyl-2-(5Z,8Z,11Z,14Z)-eicosatetraenoyl-sn-glycero-3-phosphoserine + ethanolamine. The enzyme catalyses 1-octadecanoyl-2-(4Z,7Z,10Z,13Z,16Z,19Z-docosahexaenoyl)-sn-glycero-3-phosphoethanolamine + L-serine = 1-octadecanoyl-2-(4Z,7Z,10Z,13Z,16Z,19Z-docosahexaenoyl)-sn-glycero-3-phosphoserine + ethanolamine. It catalyses the reaction 1-(1Z-octadecenyl)-2-(4Z,7Z,10Z,13Z,16Z,19Z-docosahexaenoyl)-sn-glycero-3-phosphoethanolamine + L-serine = 1-(1Z-octadecenyl)-2-(4Z,7Z,10Z,13Z,16Z,19Z-docosahexaenoyl)-sn-glycero-3-phospho-L-serine + ethanolamine. The catalysed reaction is 1-octadecanoyl-2-(9Z-octadecenoyl)-sn-glycero-3-phosphoethanolamine + L-serine = 1-octadecanoyl-2-(9Z-octadecenoyl)-sn-glycero-3-phospho-L-serine + ethanolamine. It carries out the reaction 1-(1Z-octadecenyl)-2-(9Z-octadecenoyl)-sn-glycero-3-phosphoethanolamine + L-serine = 1-(1Z-octadecenyl)-2-(9Z-octadecenoyl)-sn-glycero-3-phospho-L-serine + ethanolamine. The enzyme catalyses 1-(1Z-octadecenyl)-2-(5Z,8Z,11Z,14Z- eicosatetraenoyl)-sn-glycero-3-phosphoethanolamine + L-serine = 1-(1Z-octadecenyl)-2-(5Z,8Z,11Z,14Z-eicosatetraenoyl)-sn-glycero-3-phospho-L-serine + ethanolamine. It participates in phospholipid metabolism; phosphatidylserine biosynthesis. Requires calcium ions. Inhibited by exogenous phosphatidylserine. Functionally, catalyzes a base-exchange reaction in which the polar head group of phosphatidylethanolamine (PE) or phosphatidylcholine (PC) is replaced by L-serine. Catalyzes the conversion of phosphatatidylethanolamine and does not act on phosphatidylcholine. Can utilize both phosphatidylethanolamine (PE) plasmalogen and diacyl PE as substrate and the latter is six times better utilized, indicating the importance of an ester linkage at the sn-1 position. Although it shows no sn-1 fatty acyl preference, exhibits significant preference towards docosahexaenoic acid (22:6n-3) compared with 18:1 or 20:4 at the sn-2 position. The chain is Phosphatidylserine synthase 2 (PTDSS2) from Homo sapiens (Human).